We begin with the raw amino-acid sequence, 144 residues long: 3-hydroxyacyl-[acyl-carrier-protein] dehydratase FabZ (144 aa).

His-52 is an active-site residue.

Belongs to the thioester dehydratase family. FabZ subfamily.

It is found in the cytoplasm. The enzyme catalyses a (3R)-hydroxyacyl-[ACP] = a (2E)-enoyl-[ACP] + H2O. Its function is as follows. Involved in unsaturated fatty acids biosynthesis. Catalyzes the dehydration of short chain beta-hydroxyacyl-ACPs and long chain saturated and unsaturated beta-hydroxyacyl-ACPs. The protein is 3-hydroxyacyl-[acyl-carrier-protein] dehydratase FabZ of Syntrophomonas wolfei subsp. wolfei (strain DSM 2245B / Goettingen).